A 460-amino-acid chain; its full sequence is Argininosuccinate lyase (460 aa).

This sequence belongs to the lyase 1 family. Argininosuccinate lyase subfamily.

The protein localises to the cytoplasm. It carries out the reaction 2-(N(omega)-L-arginino)succinate = fumarate + L-arginine. It functions in the pathway amino-acid biosynthesis; L-arginine biosynthesis; L-arginine from L-ornithine and carbamoyl phosphate: step 3/3. This is Argininosuccinate lyase from Nitratidesulfovibrio vulgaris (strain ATCC 29579 / DSM 644 / CCUG 34227 / NCIMB 8303 / VKM B-1760 / Hildenborough) (Desulfovibrio vulgaris).